A 716-amino-acid chain; its full sequence is Polyribonucleotide nucleotidyltransferase (716 aa).

Mg(2+)-binding residues include D493 and D499. Positions 560 to 619 constitute a KH domain; sequence PRMITIKINPEKIRDVIGKGGSVIRALTEETGTTIDISDDGVVTIASTSSEGMAEAKKRI. In terms of domain architecture, S1 motif spans 629–697; sequence GQVYEGTVLK…EKGRVRLSAK (69 aa).

It belongs to the polyribonucleotide nucleotidyltransferase family. Mg(2+) is required as a cofactor.

The protein localises to the cytoplasm. The enzyme catalyses RNA(n+1) + phosphate = RNA(n) + a ribonucleoside 5'-diphosphate. Its function is as follows. Involved in mRNA degradation. Catalyzes the phosphorolysis of single-stranded polyribonucleotides processively in the 3'- to 5'-direction. In Paraburkholderia xenovorans (strain LB400), this protein is Polyribonucleotide nucleotidyltransferase.